Reading from the N-terminus, the 86-residue chain is Myosuppressin (86 aa).

Residues 1–18 form the signal peptide; that stretch reads MAIFCNNVLAALPTQCNP. A propeptide spanning residues 19 to 70 is cleaved from the precursor; sequence GFLDDLPPRIRKVCVALSRIYELGSEMESYIGDKENHITGFHESIPLLDSGV. Pyrrolidone carboxylic acid is present on glutamine 73. At phenylalanine 82 the chain carries Phenylalanine amide.

Its subcellular location is the secreted. In terms of biological role, myoinhibiting neuropeptide. This Apis mellifera (Honeybee) protein is Myosuppressin.